Consider the following 1091-residue polypeptide: Self-sufficient cytochrome P450 monooxygenase CYP505E1 (1091 aa).

Cysteine 433 provides a ligand contact to heme. A Flavodoxin-like domain is found at isoleucine 528–leucine 669. FMN is bound by residues serine 534 to threonine 538 and valine 613 to alanine 645. An FAD-binding FR-type domain is found at lysine 707–proline 935.

In the N-terminal section; belongs to the cytochrome P450 family. Requires FAD as cofactor. It depends on FMN as a cofactor. The cofactor is heme.

It carries out the reaction 2 oxidized [cytochrome P450] + NADPH = 2 reduced [cytochrome P450] + NADP(+) + H(+). The enzyme catalyses an organic molecule + reduced [NADPH--hemoprotein reductase] + O2 = an alcohol + oxidized [NADPH--hemoprotein reductase] + H2O + H(+). The catalysed reaction is dodecanoate + reduced [NADPH--hemoprotein reductase] + O2 = 5-hydroxydodecanoate + oxidized [NADPH--hemoprotein reductase] + H2O + H(+). It catalyses the reaction tetradecanoate + reduced [NADPH--hemoprotein reductase] + O2 = 7-hydroxytetradecanoate + oxidized [NADPH--hemoprotein reductase] + H2O + H(+). It carries out the reaction dodecan-1-ol + reduced [NADPH--hemoprotein reductase] + O2 = 1,5-dodecanediol + oxidized [NADPH--hemoprotein reductase] + H2O + H(+). The enzyme catalyses dodecan-1-ol + reduced [NADPH--hemoprotein reductase] + O2 = 1,4-dodecanediol + oxidized [NADPH--hemoprotein reductase] + H2O + H(+). The catalysed reaction is dodecan-1-ol + reduced [NADPH--hemoprotein reductase] + O2 = 1,6-dodecanediol + oxidized [NADPH--hemoprotein reductase] + H2O + H(+). Self-sufficient cytochrome P450 monooxygenase that catalyzes the regioselective in-chain hydroxylation of alkanes, fatty alcohols, and fatty acids at the omega-7 position. Performs hydroxylation of C10-C16 n-alkanes and C12 and C14 fatty alcohols; and thereby enables the one step biocatalytic synthesis of rare alcohols such as 5-dodecanol and 7-tetradecanol. Converts 1-dodecanol into 1,5-dodecanediol as major product with very little sub-terminally hydroxylated products with the 1,4-dodecanediol and 1,6-dodecanediol more abundant. Converts dodecanoic acid to 5-hydroxydodecanoic acid which can be further converted into delta-dodecalactone by lactonization of the 5-hydroxy acid at low pH. Also gives sub-terminal hydroxylation of dodecanoic acid with 9-hydroxydodecanoic acid being the second most abundant product. The polypeptide is Self-sufficient cytochrome P450 monooxygenase CYP505E1 (Aspergillus niger (strain ATCC MYA-4892 / CBS 513.88 / FGSC A1513)).